We begin with the raw amino-acid sequence, 244 residues long: Zinc import ATP-binding protein ZnuC 2 (244 aa).

The ABC transporter domain occupies 3–218; sequence IGCASLTIQL…PEYLALFGID (216 aa). Residue 35-42 coordinates ATP; it reads GPNGSGKT.

The protein belongs to the ABC transporter superfamily. Zinc importer (TC 3.A.1.15.5) family. The complex is composed of two ATP-binding proteins (ZnuC), two transmembrane proteins (ZnuB) and a solute-binding protein (ZnuA).

The protein resides in the cell inner membrane. It catalyses the reaction Zn(2+)(out) + ATP(in) + H2O(in) = Zn(2+)(in) + ADP(in) + phosphate(in) + H(+)(in). Part of the ABC transporter complex ZnuABC involved in zinc import. Responsible for energy coupling to the transport system. The polypeptide is Zinc import ATP-binding protein ZnuC 2 (Hahella chejuensis (strain KCTC 2396)).